The sequence spans 316 residues: Protoheme IX farnesyltransferase (316 aa).

Helical transmembrane passes span 34–54 (VMSL…GHIN), 55–75 (PFIG…SGAL), 95–115 (IPAG…LSAF), 118–138 (IILG…TIFF), 155–175 (IVIG…CVTG), 182–202 (IVLF…LALF), 228–250 (IVIY…FASL), 254–273 (AFAT…VLRM), and 287–307 (FAFS…DYAI).

This sequence belongs to the UbiA prenyltransferase family. Protoheme IX farnesyltransferase subfamily.

Its subcellular location is the cell inner membrane. It carries out the reaction heme b + (2E,6E)-farnesyl diphosphate + H2O = Fe(II)-heme o + diphosphate. It participates in porphyrin-containing compound metabolism; heme O biosynthesis; heme O from protoheme: step 1/1. Its function is as follows. Converts heme B (protoheme IX) to heme O by substitution of the vinyl group on carbon 2 of heme B porphyrin ring with a hydroxyethyl farnesyl side group. The sequence is that of Protoheme IX farnesyltransferase from Rhizobium meliloti (strain 1021) (Ensifer meliloti).